A 627-amino-acid chain; its full sequence is MGKVLGIDLGTTNSAMAVYTNGEAAIIANKEGKNTTPSIVAFTDKGEVLVGESAKRQAVTNPEKTIYSIKRIMGLMCEEEKANEAKERLPYHIIDRNGACAIEVAGKTYTPQEISAKVLMKMKEDAEAYLGETVTDAVITVPAYFNDAQRKATKEAGTIAGLNVLRIINEPTSAALAYGLDKKEAEQIVVYDLGGGTFDVTALETGDGVVEVLATGGDAFLGGDDFDNRIIDYVADEFKSESGIDIKADVMALQRVKDAAEAAKKELSSATETEINLPFITADASGPKHLVTKITRAKFESLIGDLVAKTIKTIEAVLKDAGLSKNDVKEVVMVGGSTRVPLVQEEVKKFFNKELNKSVNPDEVVALGAAIQGGVLAGDVKDVLLLDVTPLSLGIETLGGVMTKVIEKGTTIPAKKSQIFSTAEDNQPAVSIHVLQGEREFAKDNKSLGMFELRDIPAAPRGVPQIEVTFDIDANGILTVSAVDKGTGKSQEIKITGSSGLSDEEIEKMVQDAEAHKAEDEKRKAVVEAKNQADALIHQTKKSLDDLGENFDANEKAGIEAAIADLETVLKDDNATKEQIDEKVKALTEKSHKLAEAAYAKEQGGQQGAADAGKKADDDDVIDAEVE.

At threonine 197 the chain carries Phosphothreonine; by autocatalysis. Residues alanine 598–aspartate 611 show a composition bias toward low complexity. The segment at alanine 598–glutamate 627 is disordered. Positions aspartate 618–glutamate 627 are enriched in acidic residues.

This sequence belongs to the heat shock protein 70 family.

Its function is as follows. Acts as a chaperone. This Sulfurovum sp. (strain NBC37-1) protein is Chaperone protein DnaK.